Consider the following 308-residue polypeptide: tRNA dimethylallyltransferase (308 aa).

9–16 (GPTAAGKT) contacts ATP. Substrate is bound at residue 11–16 (TAAGKT). Interaction with substrate tRNA regions lie at residues 34 to 37 (DSMQ) and 158 to 162 (QRLLR).

It belongs to the IPP transferase family. Monomer. Requires Mg(2+) as cofactor.

The enzyme catalyses adenosine(37) in tRNA + dimethylallyl diphosphate = N(6)-dimethylallyladenosine(37) in tRNA + diphosphate. Catalyzes the transfer of a dimethylallyl group onto the adenine at position 37 in tRNAs that read codons beginning with uridine, leading to the formation of N6-(dimethylallyl)adenosine (i(6)A). The chain is tRNA dimethylallyltransferase from Maricaulis maris (strain MCS10) (Caulobacter maris).